The primary structure comprises 621 residues: MFDFEYQLKIIPEKPGVYLMKNSLGEVIYVGKAKVLKNRVRQYFQNSKNHGSKVRAMVKNIAEFEYIITDSEMEALILECNLIKKYRPRYNILLKDDKHYPFLKITTNEDFPRIFVTRVRAKDGARYLGPYPETSAVYETIELIKKIFPLRTCRLNIKENGEPVKPCLNYHIKLCTAPCAGYISREEYGKTIKKIIDLLNGKDNEVINDLKIKMEKASSELKFEEAASFRDKLLAVEKIRERQKIISSNFENEDFINMYSEEIDLCAQIFFVRDGKIMGREHFILDRSIFGNNADIISNFIKDFYGGTAFIPKTIYVPEVMDIELLENWLSSKKGSKVSIKIPQKGEKKKILDLVESNAKNTLEQFKLKLKVDKELYSNTLKELQNILELEEIPNRIEAYDISNIQGVDSVGSMIVFDKGKPKNSDYRRFKIKTVKGANDYDSMREILTRRFTHGLEEIKEIQKRNLLLSGAKFSVFPDLILMDGGKGQVNIALEVLEKLNINIPVCGMVKDDKHKTRGLVYNNKEINIKSNNKIMQFITRVQDEVHRFAITYHRSLRNRRVLHSVLEDIPNIGEKRRKELLQKFGSVENIKKASYDELLDTNSINQKAAKSIIDYFNNAK.

The region spanning 13 to 92 (EKPGVYLMKN…IKKYRPRYNI (80 aa)) is the GIY-YIG domain. One can recognise a UVR domain in the interval 204–239 (NEVINDLKIKMEKASSELKFEEAASFRDKLLAVEKI).

The protein belongs to the UvrC family. As to quaternary structure, interacts with UvrB in an incision complex.

Its subcellular location is the cytoplasm. The UvrABC repair system catalyzes the recognition and processing of DNA lesions. UvrC both incises the 5' and 3' sides of the lesion. The N-terminal half is responsible for the 3' incision and the C-terminal half is responsible for the 5' incision. This chain is UvrABC system protein C, found in Clostridium novyi (strain NT).